A 323-amino-acid chain; its full sequence is Olfactory receptor 51S1 (323 aa).

At 1 to 33 the chain is on the extracellular side; it reads MSTLPTQIAPNSSTSMAPTFLLVGMPGLSGAPS. N11 carries an N-linked (GlcNAc...) asparagine glycan. A helical membrane pass occupies residues 34 to 54; it reads WWTLPLIAVYLLSALGNGTIL. The Cytoplasmic segment spans residues 55 to 62; the sequence is WIIALQPA. A helical membrane pass occupies residues 63–83; it reads LHRPMHFFLFLLSVSDIGLVT. The Extracellular portion of the chain corresponds to 84-107; sequence ALMPTLLGIALAGAHTVPASACLL. A disulfide bond links C105 and C197. Residues 108 to 128 form a helical membrane-spanning segment; that stretch reads QMVFIHVFSVMESSVLLAMSI. Topologically, residues 129 to 147 are cytoplasmic; it reads DRALAICRPLHYPALLTNG. A helical membrane pass occupies residues 148–168; the sequence is VISKISLAISFRCLGLHLPLP. Residues 169-203 lie on the Extracellular side of the membrane; the sequence is FLLAYMPYCLPQVLTHSYCLHPDVARLACPEAWGA. A helical transmembrane segment spans residues 204–224; the sequence is AYSLFVVLSAMGLDPLLIFFS. Topologically, residues 225–244 are cytoplasmic; it reads YGLIGKVLQGVESREDRWKA. A helical transmembrane segment spans residues 245 to 265; that stretch reads GQTCAAHLSAVLLFYIPMILL. The Extracellular segment spans residues 266 to 280; sequence ALINHPELPITQHTH. A helical transmembrane segment spans residues 281-301; that stretch reads TLLSYVHFLLPPLINPILYSV. The Cytoplasmic portion of the chain corresponds to 302–323; it reads KMKEIRKRILNRLQPRKVGGAQ.

It belongs to the G-protein coupled receptor 1 family.

It is found in the cell membrane. Its function is as follows. Odorant receptor. This is Olfactory receptor 51S1 (OR51S1) from Homo sapiens (Human).